The chain runs to 478 residues: Glycogen synthase (478 aa).

Lys-16 is an ADP-alpha-D-glucose binding site.

The protein belongs to the glycosyltransferase 1 family. Bacterial/plant glycogen synthase subfamily.

It catalyses the reaction [(1-&gt;4)-alpha-D-glucosyl](n) + ADP-alpha-D-glucose = [(1-&gt;4)-alpha-D-glucosyl](n+1) + ADP + H(+). Its pathway is glycan biosynthesis; glycogen biosynthesis. Functionally, synthesizes alpha-1,4-glucan chains using ADP-glucose. The chain is Glycogen synthase from Lachnospira eligens (strain ATCC 27750 / DSM 3376 / VPI C15-48 / C15-B4) (Eubacterium eligens).